A 414-amino-acid chain; its full sequence is tRNA(Ile)-lysidine synthase (414 aa).

13–18 (SGGIDS) contributes to the ATP binding site.

This sequence belongs to the tRNA(Ile)-lysidine synthase family.

The protein resides in the cytoplasm. It carries out the reaction cytidine(34) in tRNA(Ile2) + L-lysine + ATP = lysidine(34) in tRNA(Ile2) + AMP + diphosphate + H(+). Ligates lysine onto the cytidine present at position 34 of the AUA codon-specific tRNA(Ile) that contains the anticodon CAU, in an ATP-dependent manner. Cytidine is converted to lysidine, thus changing the amino acid specificity of the tRNA from methionine to isoleucine. The sequence is that of tRNA(Ile)-lysidine synthase from Thermotoga sp. (strain RQ2).